A 1413-amino-acid chain; its full sequence is DNA-directed RNA polymerase subunit beta' (1413 aa).

Residues C70, C72, C85, and C88 each contribute to the Zn(2+) site. The Mg(2+) site is built by D460, D462, and D464. Zn(2+)-binding residues include C814, C888, C895, and C898.

This sequence belongs to the RNA polymerase beta' chain family. As to quaternary structure, the RNAP catalytic core consists of 2 alpha, 1 beta, 1 beta' and 1 omega subunit. When a sigma factor is associated with the core the holoenzyme is formed, which can initiate transcription. Mg(2+) serves as cofactor. Requires Zn(2+) as cofactor.

The catalysed reaction is RNA(n) + a ribonucleoside 5'-triphosphate = RNA(n+1) + diphosphate. DNA-dependent RNA polymerase catalyzes the transcription of DNA into RNA using the four ribonucleoside triphosphates as substrates. The chain is DNA-directed RNA polymerase subunit beta' from Buchnera aphidicola subsp. Schizaphis graminum (strain Sg).